The sequence spans 107 residues: Phosphoribosyl-ATP pyrophosphatase (107 aa).

It belongs to the PRA-PH family.

The protein localises to the cytoplasm. It carries out the reaction 1-(5-phospho-beta-D-ribosyl)-ATP + H2O = 1-(5-phospho-beta-D-ribosyl)-5'-AMP + diphosphate + H(+). Its pathway is amino-acid biosynthesis; L-histidine biosynthesis; L-histidine from 5-phospho-alpha-D-ribose 1-diphosphate: step 2/9. The polypeptide is Phosphoribosyl-ATP pyrophosphatase (Methylobacterium nodulans (strain LMG 21967 / CNCM I-2342 / ORS 2060)).